Consider the following 342-residue polypeptide: NADH-ubiquinone oxidoreductase chain 2 (342 aa).

9 consecutive transmembrane segments (helical) span residues 25-45, 58-78, 94-114, 146-166, 174-194, 195-215, 238-258, 274-294, and 316-336; these read TPWL…IPML, IKYF…ILII, MMIM…FWLP, MSSF…MGGL, ILAY…TISE, NTWE…IFMF, FMMM…GFLP, LVLL…RISF, and VVAL…TSNF.

Belongs to the complex I subunit 2 family.

Its subcellular location is the mitochondrion inner membrane. It catalyses the reaction a ubiquinone + NADH + 5 H(+)(in) = a ubiquinol + NAD(+) + 4 H(+)(out). In terms of biological role, core subunit of the mitochondrial membrane respiratory chain NADH dehydrogenase (Complex I) that is believed to belong to the minimal assembly required for catalysis. Complex I functions in the transfer of electrons from NADH to the respiratory chain. The immediate electron acceptor for the enzyme is believed to be ubiquinone. This Locusta migratoria (Migratory locust) protein is NADH-ubiquinone oxidoreductase chain 2 (ND2).